The primary structure comprises 37 residues: Large ribosomal subunit protein bL36B (37 aa).

Belongs to the bacterial ribosomal protein bL36 family.

The protein is Large ribosomal subunit protein bL36B of Aeromonas salmonicida (strain A449).